Reading from the N-terminus, the 303-residue chain is MTRHFLDLSAMTATDLRTIIDDARVRKSATKAGTAEKPLAGKMLAMIFEKPSTRTRVSFDVGMRQLGGETLFLSGTEMQLGRAETIGDTAKVLSRYVDAIMIRTTDHRRLLEMAEHATVPVINGLTDDTHPCQIMADILTFEEHRGPVKGKTIAWTGDGNNVLHSLIEGSARFGYRMNMAVPLGSEPHDKFLNWARNNGAEVLLSHEAEQAVAGAHCVVTDTWISMNQEHRARGHNVFQPYQVNGALMKHAAPDALFMHCLPAHRGEEVTDEVIDGPQSVVFDEAENRLHAQKSILAWCMGAV.

Carbamoyl phosphate contacts are provided by residues 52-55 (STRT), glutamine 79, arginine 103, and 130-133 (HPCQ). L-ornithine is bound by residues asparagine 161, aspartate 221, and 225 to 226 (SM). Residues 260–261 (CL) and arginine 288 contribute to the carbamoyl phosphate site.

It belongs to the aspartate/ornithine carbamoyltransferase superfamily. OTCase family.

Its subcellular location is the cytoplasm. The enzyme catalyses carbamoyl phosphate + L-ornithine = L-citrulline + phosphate + H(+). The protein operates within amino-acid biosynthesis; L-arginine biosynthesis; L-arginine from L-ornithine and carbamoyl phosphate: step 1/3. Functionally, reversibly catalyzes the transfer of the carbamoyl group from carbamoyl phosphate (CP) to the N(epsilon) atom of ornithine (ORN) to produce L-citrulline. In Rhizobium meliloti (strain 1021) (Ensifer meliloti), this protein is Ornithine carbamoyltransferase (argF).